Reading from the N-terminus, the 610-residue chain is Dihydroxy-acid dehydratase (610 aa).

Asp-81 is a Mg(2+) binding site. Cys-122 is a binding site for [2Fe-2S] cluster. Mg(2+) is bound by residues Asp-123 and Lys-124. Lys-124 is modified (N6-carboxylysine). Cys-193 provides a ligand contact to [2Fe-2S] cluster. Glu-489 contacts Mg(2+). Ser-515 (proton acceptor) is an active-site residue.

The protein belongs to the IlvD/Edd family. Homodimer. Requires [2Fe-2S] cluster as cofactor. Mg(2+) serves as cofactor.

It carries out the reaction (2R)-2,3-dihydroxy-3-methylbutanoate = 3-methyl-2-oxobutanoate + H2O. The enzyme catalyses (2R,3R)-2,3-dihydroxy-3-methylpentanoate = (S)-3-methyl-2-oxopentanoate + H2O. Its pathway is amino-acid biosynthesis; L-isoleucine biosynthesis; L-isoleucine from 2-oxobutanoate: step 3/4. It participates in amino-acid biosynthesis; L-valine biosynthesis; L-valine from pyruvate: step 3/4. Its function is as follows. Functions in the biosynthesis of branched-chain amino acids. Catalyzes the dehydration of (2R,3R)-2,3-dihydroxy-3-methylpentanoate (2,3-dihydroxy-3-methylvalerate) into 2-oxo-3-methylpentanoate (2-oxo-3-methylvalerate) and of (2R)-2,3-dihydroxy-3-methylbutanoate (2,3-dihydroxyisovalerate) into 2-oxo-3-methylbutanoate (2-oxoisovalerate), the penultimate precursor to L-isoleucine and L-valine, respectively. This chain is Dihydroxy-acid dehydratase, found in Xylella fastidiosa (strain M12).